A 268-amino-acid chain; its full sequence is Phycocyanobilin lyase subunit alpha (268 aa).

Belongs to the CpcE/RpcE/PecE family. As to quaternary structure, cpcE and CpcF associate to form a lyase.

Required for the chromophorylation of the cpcA gene product. In Picosynechococcus sp. (strain ATCC 27264 / PCC 7002 / PR-6) (Agmenellum quadruplicatum), this protein is Phycocyanobilin lyase subunit alpha (cpcE).